Here is a 330-residue protein sequence, read N- to C-terminus: Probable aldo-keto reductase 6 (330 aa).

Tyr64 functions as the Proton donor in the catalytic mechanism. Position 132 (His132) interacts with substrate. Position 211 to 221 (211 to 221 (SPLGRGFLGLP)) interacts with NADP(+).

The protein belongs to the aldo/keto reductase family.

The polypeptide is Probable aldo-keto reductase 6 (Arabidopsis thaliana (Mouse-ear cress)).